The sequence spans 506 residues: Maturase K (506 aa).

It belongs to the intron maturase 2 family. MatK subfamily.

It localises to the plastid. The protein resides in the chloroplast. Usually encoded in the trnK tRNA gene intron. Probably assists in splicing its own and other chloroplast group II introns. The protein is Maturase K of Rhododendron hippophaeoides (Rhododendron).